Reading from the N-terminus, the 511-residue chain is MKDNKIIIFDTTLRDGEQALGSSLGINQKLQIALALENLGVDVIEAGFPVSSQGDFKAVQKIASKVKNSTICALSRALDKDIDMAYEALKVAKHFRIHTFIATSTLHMQDKLKKDFDEILSMAKRAIIRARSYTDDVEFSCEDAGRTPIDNLCFMVENAIKAGAKTINIPDTVGYTLPSEFANIIKILFNKVPNIDKAIISVHCHNDLGMATGNSLSAILQGARQIECTINGLGERAGNCALEEVVMAIKTRKDYLKGFYTDIKCENIFKTSKLVSAITNESIPSHKAIVGSNAFSHSSGIHQDGVLKNRQTYEIISPSAIGIHENRMLMTARSGRAMIKTCLENLGYDENTYNLDDVYERFLRLADKKGQVYDYDLEALMFLSYESEEENEFVLEKLSVISGNIPTACVCMRIKEELKTEACTGNGPVEAVFNCIARITNLKPALKAYSINAKSSGVDAQGQVDVDLEFKGRKFHGKGLSTDVIEASAQAFVSAYNAIYRSLKVEERKMA.

In terms of domain architecture, Pyruvate carboxyltransferase spans 6 to 269 (IIIFDTTLRD…YTDIKCENIF (264 aa)). Residues aspartate 15, histidine 203, histidine 205, and asparagine 239 each contribute to the Mn(2+) site. The interval 394–511 (VLEKLSVISG…SLKVEERKMA (118 aa)) is regulatory domain.

It belongs to the alpha-IPM synthase/homocitrate synthase family. LeuA type 1 subfamily. Homodimer. The cofactor is Mn(2+).

Its subcellular location is the cytoplasm. The enzyme catalyses 3-methyl-2-oxobutanoate + acetyl-CoA + H2O = (2S)-2-isopropylmalate + CoA + H(+). Its pathway is amino-acid biosynthesis; L-leucine biosynthesis; L-leucine from 3-methyl-2-oxobutanoate: step 1/4. Its function is as follows. Catalyzes the condensation of the acetyl group of acetyl-CoA with 3-methyl-2-oxobutanoate (2-ketoisovalerate) to form 3-carboxy-3-hydroxy-4-methylpentanoate (2-isopropylmalate). In Campylobacter jejuni subsp. jejuni serotype O:2 (strain ATCC 700819 / NCTC 11168), this protein is 2-isopropylmalate synthase.